Reading from the N-terminus, the 257-residue chain is Probable pectate lyase E (257 aa).

Residues 1-17 form the signal peptide; that stretch reads MYQKLLLVPLLLTSALA.

The protein belongs to the polysaccharide lyase 3 family. Ca(2+) serves as cofactor.

The protein localises to the secreted. It catalyses the reaction Eliminative cleavage of (1-&gt;4)-alpha-D-galacturonan to give oligosaccharides with 4-deoxy-alpha-D-galact-4-enuronosyl groups at their non-reducing ends.. Pectinolytic enzyme consist of four classes of enzymes: pectin lyase, polygalacturonase, pectin methylesterase and rhamnogalacturonase. Among pectinolytic enzymes, pectin lyase is the most important in depolymerization of pectin, since it cleaves internal glycosidic bonds of highly methylated pectins. Favors pectate, the anion, over pectin, the methyl ester. This is Probable pectate lyase E (plyE) from Aspergillus flavus (strain ATCC 200026 / FGSC A1120 / IAM 13836 / NRRL 3357 / JCM 12722 / SRRC 167).